A 31-amino-acid polypeptide reads, in one-letter code: Cytochrome b6-f complex subunit 6 (31 aa).

The chain crosses the membrane as a helical span at residues 4 to 26 (ITSYFGFLLAALTITSALLIGLN).

The protein belongs to the PetL family. As to quaternary structure, the 4 large subunits of the cytochrome b6-f complex are cytochrome b6, subunit IV (17 kDa polypeptide, PetD), cytochrome f and the Rieske protein, while the 4 small subunits are PetG, PetL, PetM and PetN. The complex functions as a dimer.

The protein localises to the plastid. It localises to the chloroplast thylakoid membrane. Component of the cytochrome b6-f complex, which mediates electron transfer between photosystem II (PSII) and photosystem I (PSI), cyclic electron flow around PSI, and state transitions. PetL is important for photoautotrophic growth as well as for electron transfer efficiency and stability of the cytochrome b6-f complex. The protein is Cytochrome b6-f complex subunit 6 of Amborella trichopoda.